The following is a 209-amino-acid chain: Octanoyltransferase (209 aa).

The BPL/LPL catalytic domain occupies 30–209; that stretch reads DHKPEIIYLV…IQTEFNKIFK (180 aa). Residues 69-76, 143-145, and 156-158 contribute to the substrate site; these read RGGKFTFH, AIG, and GVA. Cysteine 174 acts as the Acyl-thioester intermediate in catalysis.

It belongs to the LipB family.

It is found in the cytoplasm. It carries out the reaction octanoyl-[ACP] + L-lysyl-[protein] = N(6)-octanoyl-L-lysyl-[protein] + holo-[ACP] + H(+). It functions in the pathway protein modification; protein lipoylation via endogenous pathway; protein N(6)-(lipoyl)lysine from octanoyl-[acyl-carrier-protein]: step 1/2. In terms of biological role, catalyzes the transfer of endogenously produced octanoic acid from octanoyl-acyl-carrier-protein onto the lipoyl domains of lipoate-dependent enzymes. Lipoyl-ACP can also act as a substrate although octanoyl-ACP is likely to be the physiological substrate. This is Octanoyltransferase from Rickettsia conorii (strain ATCC VR-613 / Malish 7).